Consider the following 269-residue polypeptide: Ribonuclease HII (269 aa).

Residues 83 to 269 (YLIAGVDEVG…HRMSFLTNIL (187 aa)) form the RNase H type-2 domain. A divalent metal cation-binding residues include Asp-89, Glu-90, and Asp-185.

It belongs to the RNase HII family. Requires Mn(2+) as cofactor. Mg(2+) serves as cofactor.

The protein resides in the cytoplasm. The enzyme catalyses Endonucleolytic cleavage to 5'-phosphomonoester.. Functionally, endonuclease that specifically degrades the RNA of RNA-DNA hybrids. This Clostridium botulinum (strain Hall / ATCC 3502 / NCTC 13319 / Type A) protein is Ribonuclease HII.